We begin with the raw amino-acid sequence, 230 residues long: Ribonuclease 3 (230 aa).

One can recognise an RNase III domain in the interval 5–125 (YSRFYNILGY…VIGAIYLDSD (121 aa)). A Mg(2+)-binding site is contributed by glutamate 40. Aspartate 44 is an active-site residue. Mg(2+) contacts are provided by aspartate 111 and glutamate 114. The active site involves glutamate 114. The 71-residue stretch at 153–223 (DSKSKLQEIL…AEKMIEMLSQ (71 aa)) folds into the DRBM domain.

Belongs to the ribonuclease III family. Homodimer. Requires Mg(2+) as cofactor.

It is found in the cytoplasm. It catalyses the reaction Endonucleolytic cleavage to 5'-phosphomonoester.. Its function is as follows. Digests double-stranded RNA. Involved in the processing of primary rRNA transcript to yield the immediate precursors to the large and small rRNAs (23S and 16S). Processes some mRNAs, and tRNAs when they are encoded in the rRNA operon. Processes pre-crRNA and tracrRNA of type II CRISPR loci if present in the organism. The chain is Ribonuclease 3 from Francisella tularensis subsp. holarctica (strain FTNF002-00 / FTA).